A 228-amino-acid chain; its full sequence is Cytidylate kinase (228 aa).

12 to 20 (GPSGSGKGT) lines the ATP pocket.

This sequence belongs to the cytidylate kinase family. Type 1 subfamily.

It localises to the cytoplasm. It catalyses the reaction CMP + ATP = CDP + ADP. The catalysed reaction is dCMP + ATP = dCDP + ADP. The sequence is that of Cytidylate kinase from Pseudomonas putida (strain W619).